A 204-amino-acid chain; its full sequence is Cytochrome c biogenesis ATP-binding export protein CcmA (204 aa).

The ABC transporter domain maps to 3-204 (LSGHGLRCVR…ARELRIGGTT (202 aa)). 35 to 42 (GPNGAGKT) serves as a coordination point for ATP.

This sequence belongs to the ABC transporter superfamily. CcmA exporter (TC 3.A.1.107) family. The complex is composed of two ATP-binding proteins (CcmA) and two transmembrane proteins (CcmB).

The protein localises to the cell inner membrane. The catalysed reaction is heme b(in) + ATP + H2O = heme b(out) + ADP + phosphate + H(+). In terms of biological role, part of the ABC transporter complex CcmAB involved in the biogenesis of c-type cytochromes; once thought to export heme, this seems not to be the case, but its exact role is uncertain. Responsible for energy coupling to the transport system. This is Cytochrome c biogenesis ATP-binding export protein CcmA from Nitrobacter hamburgensis (strain DSM 10229 / NCIMB 13809 / X14).